A 201-amino-acid chain; its full sequence is Probable molybdenum cofactor guanylyltransferase (201 aa).

GTP is bound by residues Leu16–Gly18, Lys28, Asp75, and Asp107. Asp107 is a binding site for Mg(2+).

It belongs to the MobA family. Mg(2+) is required as a cofactor.

It localises to the cytoplasm. It catalyses the reaction Mo-molybdopterin + GTP + H(+) = Mo-molybdopterin guanine dinucleotide + diphosphate. Functionally, transfers a GMP moiety from GTP to Mo-molybdopterin (Mo-MPT) cofactor (Moco or molybdenum cofactor) to form Mo-molybdopterin guanine dinucleotide (Mo-MGD) cofactor. The sequence is that of Probable molybdenum cofactor guanylyltransferase from Mycobacterium bovis (strain ATCC BAA-935 / AF2122/97).